Consider the following 644-residue polypeptide: Core protein VP4 (644 aa).

This sequence belongs to the orbivirus VP4 family.

It is found in the virion. Functionally, the VP4 protein is one of the five proteins (with VP1, VP3, VP6 and VP7) which form the inner capsid of the virus. This chain is Core protein VP4 (Segment-4), found in Bluetongue virus 2 (isolate USA) (BTV 2).